Consider the following 544-residue polypeptide: MSEENLRPAYDDQVNEDVYKRGAQSKLTKARKADFDDEKDKKKDNDKHIDKRPKSGPRLDENGNPLPKEPRLPKRKVAVMVGYCGTGYHGMQYNPPNPTIESALFKAFVEAGAISKDNSNDLKKNGFMRAARTDKGVHAGGNLISLKMIIEDPDIKQKINEKLPEGIRVWDIERVNKAFDCRKMCSSRWYEYLLPTYSLIGPKPGSILYRDIEESKTELPGVLDEDLESKEFWEEFKKDANEKFSTEEIEAILAYVPPARDEFDINEELYQKVKKYKQLENAHRRRYRISAAKLAKFRASTSQYLGAHNFHNFTLGKDFKEPSAIRFMKDIKVSDPFVIGDAQTEWISIKIHGQSFMLHQIRKMVSMATLITRCGCPVERISQAYGQQKINIPKAPALGLLLEAPVFEGYNKRLEQFGYKAIDFSKYQDEVDKFKMKHIYDKIYKEEVDENVFNAFFSYIDSFNKVTGAQGEETADKSGPAVQKSIFEFLTAKGIPGLTDAPESNKKIKQRKRMEEEEAASKKAEISSTTQSNEPEVQPEAAAN.

Basic and acidic residues-rich tracts occupy residues 1 to 10 (MSEENLRPAY) and 31 to 61 (RKADFDDEKDKKKDNDKHIDKRPKSGPRLDE). The disordered stretch occupies residues 1 to 74 (MSEENLRPAY…PLPKEPRLPK (74 aa)). Residue D134 is the Nucleophile of the active site. Residues 495 to 544 (IPGLTDAPESNKKIKQRKRMEEEEAASKKAEISSTTQSNEPEVQPEAAAN) are disordered. Residues 513 to 525 (RMEEEEAASKKAE) are compositionally biased toward basic and acidic residues.

The protein belongs to the tRNA pseudouridine synthase TruA family. Zn(2+) serves as cofactor.

The protein localises to the nucleus. The enzyme catalyses a uridine in tRNA = a pseudouridine in tRNA. It carries out the reaction uridine in snRNA = pseudouridine in snRNA. The catalysed reaction is a uridine in mRNA = a pseudouridine in mRNA. Its function is as follows. Formation of pseudouridine at positions 27 and 28 in the anticodon stem and loop of transfer RNAs; at positions 34 and 36 of intron-containing precursor tRNA(Ile) and at position 35 in the intron-containing tRNA(Tyr). Catalyzes pseudouridylation at position 44 in U2 snRNA. Also catalyzes pseudouridylation of mRNAs. This Saccharomyces cerevisiae (strain ATCC 204508 / S288c) (Baker's yeast) protein is tRNA pseudouridine synthase 1 (PUS1).